The following is a 572-amino-acid chain: Proline--tRNA ligase (572 aa).

It belongs to the class-II aminoacyl-tRNA synthetase family. ProS type 1 subfamily. In terms of assembly, homodimer.

The protein resides in the cytoplasm. The catalysed reaction is tRNA(Pro) + L-proline + ATP = L-prolyl-tRNA(Pro) + AMP + diphosphate. Functionally, catalyzes the attachment of proline to tRNA(Pro) in a two-step reaction: proline is first activated by ATP to form Pro-AMP and then transferred to the acceptor end of tRNA(Pro). As ProRS can inadvertently accommodate and process non-cognate amino acids such as alanine and cysteine, to avoid such errors it has two additional distinct editing activities against alanine. One activity is designated as 'pretransfer' editing and involves the tRNA(Pro)-independent hydrolysis of activated Ala-AMP. The other activity is designated 'posttransfer' editing and involves deacylation of mischarged Ala-tRNA(Pro). The misacylated Cys-tRNA(Pro) is not edited by ProRS. This chain is Proline--tRNA ligase, found in Photorhabdus laumondii subsp. laumondii (strain DSM 15139 / CIP 105565 / TT01) (Photorhabdus luminescens subsp. laumondii).